The primary structure comprises 211 residues: FMN-dependent NADH:quinone oxidoreductase (211 aa).

FMN-binding positions include Ser-10 and 16–18; that span reads SVS.

This sequence belongs to the azoreductase type 1 family. As to quaternary structure, homodimer. FMN is required as a cofactor.

The enzyme catalyses 2 a quinone + NADH + H(+) = 2 a 1,4-benzosemiquinone + NAD(+). It catalyses the reaction N,N-dimethyl-1,4-phenylenediamine + anthranilate + 2 NAD(+) = 2-(4-dimethylaminophenyl)diazenylbenzoate + 2 NADH + 2 H(+). Functionally, quinone reductase that provides resistance to thiol-specific stress caused by electrophilic quinones. Also exhibits azoreductase activity. Catalyzes the reductive cleavage of the azo bond in aromatic azo compounds to the corresponding amines. The protein is FMN-dependent NADH:quinone oxidoreductase of Parafrankia sp. (strain EAN1pec).